A 158-amino-acid chain; its full sequence is Lectin-like protein EP153R (158 aa).

The Cytoplasmic segment spans residues 1–26 (MFLNKKYPSLIEKKMDDLMTLKFCYL). The helical transmembrane segment at 27 to 47 (IITFLIITNIFSLAINIWGGG) threads the bilayer. At 48–158 (DMIDRQSCEN…YTETFFICSN (111 aa)) the chain is on the extracellular side. Cysteine 61 and cysteine 72 are oxidised to a cystine. Residues 61-157 (CPKDWVGYNN…KYTETFFICS (97 aa)) form a lectin-like region. N-linked (GlcNAc...) asparagine; by host glycans are attached at residues asparagine 81, asparagine 94, asparagine 100, asparagine 106, asparagine 112, asparagine 119, and asparagine 139.

The protein belongs to the asfivirus lectin-like protein family. Homodimer.

The protein resides in the host endoplasmic reticulum membrane. Down-regulates MHC-I expression by impairing the appropriate configuration or presentation into the plasma membrane of the latter. Participates in viral hemadsorption, which may help viral spread. Reduces the transactivating activity of host TP53, thus inhibiting apoptosis. Non-essential for virus growth in swine macrophage cell cultures. This African swine fever virus (isolate Pig/Kenya/KEN-50/1950) (ASFV) protein is Lectin-like protein EP153R.